The primary structure comprises 292 residues: Elongation factor Ts (292 aa).

Residues 79 to 82 (TDFV) form an involved in Mg(2+) ion dislocation from EF-Tu region.

Belongs to the EF-Ts family.

Its subcellular location is the cytoplasm. Its function is as follows. Associates with the EF-Tu.GDP complex and induces the exchange of GDP to GTP. It remains bound to the aminoacyl-tRNA.EF-Tu.GTP complex up to the GTP hydrolysis stage on the ribosome. The polypeptide is Elongation factor Ts (Xylella fastidiosa (strain 9a5c)).